We begin with the raw amino-acid sequence, 840 residues long: MTSGAPPTISTEKSRSKQLRKSSKRTASTVEGTEAKQMRGDTENRSDGEMDDVSTSSEIRHGNGFIENFRSQTGNSSRTTATNERIKKKLVIKNFKANANQNDVAMGDTNIDSTDGSVGRDWAVLSDNVFAILEDRKTVTTLEGLFSKVRSVCDKNQSKVLYDRLVAIVVQFAKSLKESLNAVEQVPLAEDNCEQYLEKFGQIWQAYPVKINLIRNIFLHLDRIALGATDTEILPLWECFMQIFQKTFFPNIFKEFKATKLFNALYMAMQKIMQRYPVDSPLRSLVDMLQTVHVSEEFAKFLISQLREHYNNERIDKVPKMNCNDYMEYCEDQINRYSQLVKVNFDEPSALKDVQATVTNCLIQQAIPEILTHDFDDLIDSDNISDIGRMFNLCRQCVGGEDEVRTQFSKYLKKRGEKLIATCPDEDLVSELLAFKKKVDFIMTGSFKSANDPVKMRQCLSDAFESFVNKQVDRSAELISKHFHTLLHSSNKNVSDDTTLDQMVDEAIVLFRYLRGKDVFEAYYKRGLAKRLFLERSASVDAEKMVLCKLKTECGSAFTYKLEGMFKDMDASENYGRLFNQYLEHMNKEKANFTARVITPEYWPTYDTYEINIPKEMRDTLTDYQDFYRVQHGNRNVKWHHGLASAVISASFRPGCKKELIATMYQTVILLLFNKCETWTVAEIVEHTKILEIEVVKNVLALLGGRDKPKVLQRVEGGGSEKKEGTVENLKNEKFVVNSKFTEKRCRVRIAQVNIKTAVEETKEVKEEVNSDRQYKIDAAVVRIMKARKQLNHQTLMTELLQQLRFPVSTADIKKRLESLIEREYISRDPEEASSYNYVA.

Positions 1-11 are enriched in polar residues; it reads MTSGAPPTIST. The interval 1-82 is disordered; that stretch reads MTSGAPPTIS…TGNSSRTTAT (82 aa). The segment covering 33-48 has biased composition (basic and acidic residues); the sequence is TEAKQMRGDTENRSDG. Positions 69 to 82 are enriched in polar residues; that stretch reads FRSQTGNSSRTTAT. Residues 772–831 enclose the Cullin neddylation domain; it reads DRQYKIDAAVVRIMKARKQLNHQTLMTELLQQLRFPVSTADIKKRLESLIEREYISRDPE. Lys786 is covalently cross-linked (Glycyl lysine isopeptide (Lys-Gly) (interchain with G-Cter in NEDD8)).

The protein belongs to the cullin family. In terms of assembly, part of an E3 ubiquitin-protein ligase complex including cul-4 and ddb-1. Post-translationally, neddylated. Deneddylated via its interaction with the COP9 signalosome (CSN) complex.

It functions in the pathway protein modification; protein ubiquitination. Its function is as follows. Component of cullin-based E3 ubiquitin-protein ligase complexes which mediate the ubiquitination and subsequent proteasomal degradation of target proteins. The functional specificity of the E3 ubiquitin-protein ligase complex depends on the variable substrate recognition component. In association with ddb-1 directs ubiquitination of cdt-1 during S phase and is required for restraining DNA rereplication. Probably is involved in ubiquitination of cki-1. The polypeptide is Cullin-4 (cul-4) (Caenorhabditis elegans).